The following is a 481-amino-acid chain: 3-isopropylmalate dehydratase large subunit (481 aa).

Residues C363, C423, and C426 each contribute to the [4Fe-4S] cluster site. The disordered stretch occupies residues 434-465 (LRPGQRAASTSNRNFEGRQGRGGRTHLVSPPV).

This sequence belongs to the aconitase/IPM isomerase family. LeuC type 1 subfamily. As to quaternary structure, heterodimer of LeuC and LeuD. [4Fe-4S] cluster is required as a cofactor.

The catalysed reaction is (2R,3S)-3-isopropylmalate = (2S)-2-isopropylmalate. The protein operates within amino-acid biosynthesis; L-leucine biosynthesis; L-leucine from 3-methyl-2-oxobutanoate: step 2/4. Its function is as follows. Catalyzes the isomerization between 2-isopropylmalate and 3-isopropylmalate, via the formation of 2-isopropylmaleate. In Salinispora tropica (strain ATCC BAA-916 / DSM 44818 / JCM 13857 / NBRC 105044 / CNB-440), this protein is 3-isopropylmalate dehydratase large subunit.